The primary structure comprises 233 residues: 2-C-methyl-D-erythritol 4-phosphate cytidylyltransferase (233 aa).

Belongs to the IspD/TarI cytidylyltransferase family. IspD subfamily.

The enzyme catalyses 2-C-methyl-D-erythritol 4-phosphate + CTP + H(+) = 4-CDP-2-C-methyl-D-erythritol + diphosphate. Its pathway is isoprenoid biosynthesis; isopentenyl diphosphate biosynthesis via DXP pathway; isopentenyl diphosphate from 1-deoxy-D-xylulose 5-phosphate: step 2/6. Its function is as follows. Catalyzes the formation of 4-diphosphocytidyl-2-C-methyl-D-erythritol from CTP and 2-C-methyl-D-erythritol 4-phosphate (MEP). The chain is 2-C-methyl-D-erythritol 4-phosphate cytidylyltransferase from Syntrophotalea carbinolica (strain DSM 2380 / NBRC 103641 / GraBd1) (Pelobacter carbinolicus).